Here is a 2188-residue protein sequence, read N- to C-terminus: Glutamate synthase 2 [NADH], chloroplastic (2188 aa).

Residues 1–30 constitute a chloroplast transit peptide; sequence MSAAQGLALKLRAAPAAGGVRGEKRRRAAS. 2 disordered regions span residues 14-40 and 61-94; these read APAAGGVRGEKRRRAASATAAAAARPR and VAPRASASRQAEAGAGAGAARPPPRSMSKIPESS. Positions 65–80 are enriched in low complexity; sequence ASASRQAEAGAGAGAA. Cys107 acts as the Nucleophile in catalysis. Positions 107 to 511 constitute a Glutamine amidotransferase type-2 domain; that stretch reads CGVGFIAELS…PGMMLLVDFE (405 aa). 1198-1255 is an FMN binding site; that stretch reads LAETHQTLVANGLRGRAVLQTDGQMKTGRDVAVACLLGAEEFGFSTAPLITLGCIMMR. [3Fe-4S] cluster contacts are provided by Cys1251, Cys1257, and Cys1262. 1974–1988 provides a ligand contact to NAD(+); the sequence is GGGDTGTDCIGTSIR.

It belongs to the glutamate synthase family. As to quaternary structure, monomer. [3Fe-4S] cluster is required as a cofactor. It depends on FAD as a cofactor. FMN serves as cofactor. In terms of tissue distribution, expressed in leaf blades and sheaths.

The protein resides in the plastid. Its subcellular location is the chloroplast. It carries out the reaction 2 L-glutamate + NAD(+) = L-glutamine + 2-oxoglutarate + NADH + H(+). Its pathway is amino-acid biosynthesis; L-glutamate biosynthesis via GLT pathway; L-glutamate from 2-oxoglutarate and L-glutamine (NAD(+) route): step 1/1. It participates in energy metabolism; nitrogen metabolism. Functionally, involved in glutamate biosynthesis. This chain is Glutamate synthase 2 [NADH], chloroplastic, found in Oryza sativa subsp. japonica (Rice).